Consider the following 173-residue polypeptide: Translation initiation factor IF-3 (173 aa).

It belongs to the IF-3 family. As to quaternary structure, monomer.

Its subcellular location is the cytoplasm. Its function is as follows. IF-3 binds to the 30S ribosomal subunit and shifts the equilibrium between 70S ribosomes and their 50S and 30S subunits in favor of the free subunits, thus enhancing the availability of 30S subunits on which protein synthesis initiation begins. In Methylorubrum extorquens (strain CM4 / NCIMB 13688) (Methylobacterium extorquens), this protein is Translation initiation factor IF-3.